The sequence spans 433 residues: Histidinol dehydrogenase 2 (433 aa).

The NAD(+) site is built by Tyr130, Gln192, and Asn215. Residues Ser238, Gln260, and His263 each coordinate substrate. Zn(2+)-binding residues include Gln260 and His263. Catalysis depends on proton acceptor residues Glu328 and His329. His329, Asp362, Glu416, and His421 together coordinate substrate. Asp362 is a Zn(2+) binding site. Position 421 (His421) interacts with Zn(2+).

It belongs to the histidinol dehydrogenase family. It depends on Zn(2+) as a cofactor.

It catalyses the reaction L-histidinol + 2 NAD(+) + H2O = L-histidine + 2 NADH + 3 H(+). It participates in amino-acid biosynthesis; L-histidine biosynthesis; L-histidine from 5-phospho-alpha-D-ribose 1-diphosphate: step 9/9. Catalyzes the sequential NAD-dependent oxidations of L-histidinol to L-histidinaldehyde and then to L-histidine. This is Histidinol dehydrogenase 2 from Trichormus variabilis (strain ATCC 29413 / PCC 7937) (Anabaena variabilis).